We begin with the raw amino-acid sequence, 310 residues long: ADP-L-glycero-D-manno-heptose-6-epimerase (310 aa).

NADP(+) is bound by residues 10 to 11 (FI), 31 to 32 (DN), Lys38, Lys53, 75 to 79 (EGACS), and Asn92. Tyr140 functions as the Proton acceptor in the catalytic mechanism. Lys144 is a binding site for NADP(+). Residue Asn169 participates in substrate binding. 2 residues coordinate NADP(+): Val170 and Lys178. Lys178 serves as the catalytic Proton acceptor. Substrate contacts are provided by residues Ser180, His187, 201–204 (FEGS), Arg209, and Tyr272.

It belongs to the NAD(P)-dependent epimerase/dehydratase family. HldD subfamily. As to quaternary structure, homopentamer. The cofactor is NADP(+).

The catalysed reaction is ADP-D-glycero-beta-D-manno-heptose = ADP-L-glycero-beta-D-manno-heptose. Its pathway is nucleotide-sugar biosynthesis; ADP-L-glycero-beta-D-manno-heptose biosynthesis; ADP-L-glycero-beta-D-manno-heptose from D-glycero-beta-D-manno-heptose 7-phosphate: step 4/4. In terms of biological role, catalyzes the interconversion between ADP-D-glycero-beta-D-manno-heptose and ADP-L-glycero-beta-D-manno-heptose via an epimerization at carbon 6 of the heptose. This Klebsiella pneumoniae (strain 342) protein is ADP-L-glycero-D-manno-heptose-6-epimerase.